Consider the following 155-residue polypeptide: Aspartate carbamoyltransferase regulatory chain (155 aa).

Zn(2+) is bound by residues cysteine 113, cysteine 118, cysteine 139, and cysteine 142.

The protein belongs to the PyrI family. In terms of assembly, contains catalytic and regulatory chains. Requires Zn(2+) as cofactor.

In terms of biological role, involved in allosteric regulation of aspartate carbamoyltransferase. The polypeptide is Aspartate carbamoyltransferase regulatory chain (Methanoculleus marisnigri (strain ATCC 35101 / DSM 1498 / JR1)).